The following is a 227-amino-acid chain: MAIKDWHEDDRPREKLLKFGAAHLSDAEILAIFLRTGTQSQSAIDLARHLIEQFGSLAELLAAPQETVLACHGIGPAKYAQILASLEIGRRYLDSQLKTGQGLGRSQMVKDYISTHLRGEPREVFAVLCLDNALNLINFEILFTGGISSCSVCIKHVLRHALSHATSQLIIAHNHPHTDATPSTADNLLTYELKKACDLIDLSLIDHVIVGRNETLSYAENCLAPFG.

One can recognise an MPN domain in the interval 102–224 (GLGRSQMVKD…TLSYAENCLA (123 aa)). Positions 173, 175, and 186 each coordinate Zn(2+). The JAMM motif signature appears at 173-186 (HNHPHTDATPSTAD).

This sequence belongs to the UPF0758 family.

In Psychrobacter arcticus (strain DSM 17307 / VKM B-2377 / 273-4), this protein is UPF0758 protein Psyc_1834.